The sequence spans 465 residues: Probable Xaa-Pro aminopeptidase PEPP (465 aa).

Positions 259, 270, 395, and 435 each coordinate Mn(2+).

Belongs to the peptidase M24B family. Mn(2+) is required as a cofactor.

It catalyses the reaction Release of any N-terminal amino acid, including proline, that is linked to proline, even from a dipeptide or tripeptide.. Its function is as follows. Catalyzes the removal of a penultimate prolyl residue from the N-termini of peptides. This is Probable Xaa-Pro aminopeptidase PEPP (PEPP) from Pyricularia oryzae (strain 70-15 / ATCC MYA-4617 / FGSC 8958) (Rice blast fungus).